Reading from the N-terminus, the 317-residue chain is MRRASRDYTKYLRGSEEMGGGPGAPHEGPLHAPPPPAPHQPPAASRSMFVALLGLGLGQVVCSVALFFYFRAQMDPNRISEDGTHCIYRILRLHENADFQDTTLESQDTKLIPDSCRRIKQAFQGAVQKELQHIVGSQHIRAEKAMVDGSWLDLAKRSKLEAQPFAHLTINATDIPSGSHKVSLSSWYHDRGWAKISNMTFSNGKLIVNQDGFYYLYANICFRHHETSGDLATEYLQLMVYVTKTSIKIPSSHTLMKGGSTKYWSGNSEFHFYSINVGGFFKLRSGEEISIEVSNPSLLDPDQDATYFGAFKVRDID.

The segment covering 1-16 (MRRASRDYTKYLRGSE) has biased composition (basic and acidic residues). The disordered stretch occupies residues 1 to 43 (MRRASRDYTKYLRGSEEMGGGPGAPHEGPLHAPPPPAPHQPPA). Residues 1–47 (MRRASRDYTKYLRGSEEMGGGPGAPHEGPLHAPPPPAPHQPPAASRS) lie on the Cytoplasmic side of the membrane. The segment covering 31 to 41 (HAPPPPAPHQP) has biased composition (pro residues). Residues 48-68 (MFVALLGLGLGQVVCSVALFF) form a helical; Signal-anchor for type II membrane protein membrane-spanning segment. Residues 69–317 (YFRAQMDPNR…FGAFKVRDID (249 aa)) are Extracellular-facing. Residues 164 to 313 (PFAHLTINAT…DATYFGAFKV (150 aa)) form the THD domain. Residues Asn171 and Asn198 are each glycosylated (N-linked (GlcNAc...) asparagine).

This sequence belongs to the tumor necrosis factor family. As to quaternary structure, homotrimer. Interacts with TNFRSF11B. Interacts with TNFRSF11A. Interacts with FBN1 (via N-terminal domain) in a Ca(+2)-dependent manner. Interacts with TNFAIP6 (via both Link and CUB domains). In terms of processing, the soluble form of isoform 1 derives from the membrane form by proteolytic processing. The cleavage may be catalyzed by ADAM17. In terms of tissue distribution, highest in the peripheral lymph nodes, weak in spleen, peripheral blood Leukocytes, bone marrow, heart, placenta, skeletal muscle, stomach and thyroid.

It localises to the cell membrane. It is found in the cytoplasm. The protein localises to the secreted. Its function is as follows. Cytokine that binds to TNFRSF11B/OPG and to TNFRSF11A/RANK. Osteoclast differentiation and activation factor. Augments the ability of dendritic cells to stimulate naive T-cell proliferation. May be an important regulator of interactions between T-cells and dendritic cells and may play a role in the regulation of the T-cell-dependent immune response. May also play an important role in enhanced bone-resorption in humoral hypercalcemia of malignancy. Induces osteoclastogenesis by activating multiple signaling pathways in osteoclast precursor cells, chief among which is induction of long lasting oscillations in the intracellular concentration of Ca (2+) resulting in the activation of NFATC1, which translocates to the nucleus and induces osteoclast-specific gene transcription to allow differentiation of osteoclasts. During osteoclast differentiation, in a TMEM64 and ATP2A2-dependent manner induces activation of CREB1 and mitochondrial ROS generation necessary for proper osteoclast generation. This is Tumor necrosis factor ligand superfamily member 11 (TNFSF11) from Homo sapiens (Human).